Here is a 425-residue protein sequence, read N- to C-terminus: Bifunctional phosphoribosylaminoimidazole carboxylase/phosphoribosylaminoimidazole succinocarboxamide synthetase (425 aa).

Residue alanine 2 is modified to N-acetylalanine. The segment at 2–260 (ATAEVLNIGK…WVAERVELLL (259 aa)) is SAICAR synthetase domain. At tyrosine 22 the chain carries Phosphotyrosine. Serine 27 carries the post-translational modification Phosphoserine. Lysine 36 is subject to N6-acetyllysine. A Phosphoserine modification is found at serine 107. Threonine 238 carries the post-translational modification Phosphothreonine. Position 247 is an N6-acetyllysine (lysine 247). Positions 261 to 266 (KSESQC) are linker. An AIR carboxylase domain region spans residues 267-425 (RVVVLMGSTS…ADKKIRECNL (159 aa)). At serine 274 the chain carries Phosphoserine. Serine 332 lines the CO2 pocket.

This sequence in the N-terminal section; belongs to the SAICAR synthetase family. The protein in the C-terminal section; belongs to the AIR carboxylase family. Class II subfamily. As to quaternary structure, homooctamer.

It catalyses the reaction 5-amino-1-(5-phospho-D-ribosyl)imidazole-4-carboxylate + L-aspartate + ATP = (2S)-2-[5-amino-1-(5-phospho-beta-D-ribosyl)imidazole-4-carboxamido]succinate + ADP + phosphate + 2 H(+). The catalysed reaction is 5-amino-1-(5-phospho-D-ribosyl)imidazole-4-carboxylate + H(+) = 5-amino-1-(5-phospho-beta-D-ribosyl)imidazole + CO2. The protein operates within purine metabolism; IMP biosynthesis via de novo pathway; 5-amino-1-(5-phospho-D-ribosyl)imidazole-4-carboxamide from 5-amino-1-(5-phospho-D-ribosyl)imidazole-4-carboxylate: step 1/2. It participates in purine metabolism; IMP biosynthesis via de novo pathway; 5-amino-1-(5-phospho-D-ribosyl)imidazole-4-carboxylate from 5-amino-1-(5-phospho-D-ribosyl)imidazole (carboxylase route): step 1/1. Functionally, bifunctional phosphoribosylaminoimidazole carboxylase and phosphoribosylaminoimidazole succinocarboxamide synthetase catalyzing two reactions of the de novo purine biosynthetic pathway. This Homo sapiens (Human) protein is Bifunctional phosphoribosylaminoimidazole carboxylase/phosphoribosylaminoimidazole succinocarboxamide synthetase.